We begin with the raw amino-acid sequence, 143 residues long: Cytochrome c-type biogenesis protein CcmE (143 aa).

Residues 1-8 (MTPVRRRK) lie on the Cytoplasmic side of the membrane. A helical; Signal-anchor for type II membrane protein transmembrane segment spans residues 9-29 (LFILLFALSVLSAAAALVLYA). Residues 30–143 (LRQNISLFYT…KSALADKVKQ (114 aa)) are Periplasmic-facing. Positions 124 and 128 each coordinate heme.

This sequence belongs to the CcmE/CycJ family.

It is found in the cell inner membrane. Heme chaperone required for the biogenesis of c-type cytochromes. Transiently binds heme delivered by CcmC and transfers the heme to apo-cytochromes in a process facilitated by CcmF and CcmH. In Legionella pneumophila (strain Lens), this protein is Cytochrome c-type biogenesis protein CcmE.